A 284-amino-acid chain; its full sequence is Tropomyosin Per a 7.0101 (284 aa).

A coiled-coil region spans residues 22–266; it reads ALLCEQQARD…EDELVHEKEK (245 aa).

Belongs to the tropomyosin family. In terms of assembly, homodimer.

Its function is as follows. Tropomyosin, in association with the troponin complex, plays a central role in the calcium dependent regulation of muscle contraction. The sequence is that of Tropomyosin Per a 7.0101 from Periplaneta americana (American cockroach).